A 355-amino-acid polypeptide reads, in one-letter code: UDP-N-acetylglucosamine--N-acetylmuramyl-(pentapeptide) pyrophosphoryl-undecaprenol N-acetylglucosamine transferase (355 aa).

UDP-N-acetyl-alpha-D-glucosamine-binding positions include 15–17, N127, R163, S191, I244, 263–268, and Q288; these read TGG and ALTVSE.

It belongs to the glycosyltransferase 28 family. MurG subfamily.

It is found in the cell inner membrane. The enzyme catalyses di-trans,octa-cis-undecaprenyl diphospho-N-acetyl-alpha-D-muramoyl-L-alanyl-D-glutamyl-meso-2,6-diaminopimeloyl-D-alanyl-D-alanine + UDP-N-acetyl-alpha-D-glucosamine = di-trans,octa-cis-undecaprenyl diphospho-[N-acetyl-alpha-D-glucosaminyl-(1-&gt;4)]-N-acetyl-alpha-D-muramoyl-L-alanyl-D-glutamyl-meso-2,6-diaminopimeloyl-D-alanyl-D-alanine + UDP + H(+). It functions in the pathway cell wall biogenesis; peptidoglycan biosynthesis. In terms of biological role, cell wall formation. Catalyzes the transfer of a GlcNAc subunit on undecaprenyl-pyrophosphoryl-MurNAc-pentapeptide (lipid intermediate I) to form undecaprenyl-pyrophosphoryl-MurNAc-(pentapeptide)GlcNAc (lipid intermediate II). The protein is UDP-N-acetylglucosamine--N-acetylmuramyl-(pentapeptide) pyrophosphoryl-undecaprenol N-acetylglucosamine transferase of Escherichia coli O157:H7.